The following is a 429-amino-acid chain: Acetylornithine aminotransferase (429 aa).

Residues 126–127 (GA) and F160 contribute to the pyridoxal 5'-phosphate site. Position 163 (R163) interacts with N(2)-acetyl-L-ornithine. Position 251–254 (251–254 (DEVQ)) interacts with pyridoxal 5'-phosphate. Position 280 is an N6-(pyridoxal phosphate)lysine (K280). S307 provides a ligand contact to N(2)-acetyl-L-ornithine. T308 is a binding site for pyridoxal 5'-phosphate.

It belongs to the class-III pyridoxal-phosphate-dependent aminotransferase family. ArgD subfamily. As to quaternary structure, homodimer. It depends on pyridoxal 5'-phosphate as a cofactor.

It is found in the cytoplasm. It carries out the reaction N(2)-acetyl-L-ornithine + 2-oxoglutarate = N-acetyl-L-glutamate 5-semialdehyde + L-glutamate. Its pathway is amino-acid biosynthesis; L-arginine biosynthesis; N(2)-acetyl-L-ornithine from L-glutamate: step 4/4. N-acetylornithine aminotransferase activity is stimulated by the addition of Mg(2+), Ca(2+) or Mn(2+), and inhibited by the addition of Zn(2+), Cu(2+), Co(2+) or Ni(2+). Functionally, catalyzes the reversible conversion of N-acetylornithine to N-acetylglutamate-5-semialdehyde. In vitro, also shows very low ornithine aminotransferase (OAT) and gamma-aminobutyrate aminotransferase (GABA-AT) activity, catalyzing the conversion of ornithine (Orn) to glutamate-5-semialdehyde and of gamma-aminobutyric acid (GABA) to succinate semialdehyde. It has been shown to function as a GABA-AT and contributes to closing the tricarboxylic acid cycle of Synechocystis sp. PCC6803 via the GABA shunt. However, the catalytic efficiency toward N-acetylornithine is 2500-fold and 10700-fold higher than that toward ornithine and gamma-aminobutyrate, respectively, indicating that the protein mainly functions as an N-acetylornithine aminotransferase. This Synechocystis sp. (strain ATCC 27184 / PCC 6803 / Kazusa) protein is Acetylornithine aminotransferase.